The sequence spans 56 residues: Large ribosomal subunit protein bL32 (56 aa).

The tract at residues 1–56 (MAVPARRTSKAKKNKRRTHKGLTTPGLSRDSETGEYRMSHRISPDGTYKGRTIIEK) is disordered. The segment covering 7 to 20 (RTSKAKKNKRRTHK) has biased composition (basic residues). The span at 29–38 (RDSETGEYRM) shows a compositional bias: basic and acidic residues.

Belongs to the bacterial ribosomal protein bL32 family.

The sequence is that of Large ribosomal subunit protein bL32 from Listeria monocytogenes serotype 4a (strain HCC23).